The sequence spans 542 residues: Gamma-terpinene synthase 1 (542 aa).

Residues D295 and D299 each coordinate Mn(2+). Positions D295 to D299 match the DDXXD motif motif. Homodimerization stretches follow at residues Y301–L307 and E373–P410. Positions 439 and 447 each coordinate Mn(2+).

The protein belongs to the terpene synthase family. Homodimer. Mn(2+) serves as cofactor. It depends on Mg(2+) as a cofactor. Mostly expressed in flowers and, to a lower extent, in leaves, especially in glandular trichomes.

The enzyme catalyses (2E)-geranyl diphosphate = gamma-terpinene + diphosphate. It carries out the reaction (2E)-geranyl diphosphate = alpha-terpinene + diphosphate. It functions in the pathway secondary metabolite biosynthesis; terpenoid biosynthesis. In terms of biological role, involved in the biosynthesis of phenolic monoterpenes natural products thymol and carvacrol which have a broad range of biological activities acting as antimicrobial compounds, insecticides, antioxidants and pharmaceutical agents. Monoterpene synthase which catalyzes the conversion of geranyl diphosphate (GPP) to gamma-terpinene and the minor products alpha-thujene, alpha-terpinene, myrcene, sabinene, (+)-R-limonene, alpha-pinene and alpha-phellandrene. In Thymus vulgaris (Thyme), this protein is Gamma-terpinene synthase 1.